A 412-amino-acid chain; its full sequence is MKPINVGLLGIGTVGGGTYTVLTRNQEEIARRAGRPIAITRVADRNLELARQVTGGKIDVTDDAFAIVSDPAIDIVVELIGGYTVARELVLKAIENGKHVVTANKALIACMAMKFLPLRRKKASSSLLKLPLLVVSPLFKAVREGLAANRIEWIAGIINGTTNFILSEMREKGLAFADVLKEAQRLGYAEADPTFDVEGIDAAHKLMILAAMLWLFVHSLCRGITKLDAVDITKRTDKGVELRVHPTLIPEKRLICQCEWRNECCAGQGRCCWPTLYYGAGAGAEPTASAVADLVDGTDRGISCPHLAFQPDRLVDLPILPIGEISSAYYLRLRAVDKPGVLADVTRILGDRQISIDAMIQKEPQEGEDQADIIILTHVTVEKNMDDAIAAIEALPAISGKVTRLRMEELSR.

NADP(+) is bound by residues leucine 9–glycine 16 and lysine 105. Residue glutamate 190 coordinates substrate. Residue lysine 205 is the Proton donor of the active site. Residues tyrosine 330 to methionine 407 enclose the ACT domain.

Belongs to the homoserine dehydrogenase family.

It carries out the reaction L-homoserine + NADP(+) = L-aspartate 4-semialdehyde + NADPH + H(+). It catalyses the reaction L-homoserine + NAD(+) = L-aspartate 4-semialdehyde + NADH + H(+). It participates in amino-acid biosynthesis; L-methionine biosynthesis via de novo pathway; L-homoserine from L-aspartate: step 3/3. The protein operates within amino-acid biosynthesis; L-threonine biosynthesis; L-threonine from L-aspartate: step 3/5. The polypeptide is Homoserine dehydrogenase (hom) (Methylobacillus glycogenes).